The primary structure comprises 146 residues: Protein archease (146 aa).

Ca(2+) is bound by residues aspartate 16, aspartate 145, and isoleucine 146.

It belongs to the archease family.

Activates the tRNA-splicing ligase complex by facilitating the enzymatic turnover of catalytic subunit RtcB. Acts by promoting the guanylylation of RtcB, a key intermediate step in tRNA ligation. Can also alter the NTP specificity of RtcB such that ATP, dGTP or ITP is used efficiently. This chain is Protein archease, found in Methanosarcina mazei (strain ATCC BAA-159 / DSM 3647 / Goe1 / Go1 / JCM 11833 / OCM 88) (Methanosarcina frisia).